A 225-amino-acid chain; its full sequence is Esterase OVCA2 (225 aa).

Catalysis depends on charge relay system residues serine 119, aspartate 177, and histidine 204.

The protein belongs to the LovG family. As to expression, strongly expressed in kidney and liver. Moderately expressed in brain, skin and testis. Weakly expressed in heart, lung, small intestine, spleen, stomach and thymus.

The catalysed reaction is a carboxylic ester + H2O = an alcohol + a carboxylate + H(+). Its function is as follows. Exhibits ester hydrolase activity with a strong preference for long-chain alkyl ester substrates and high selectivity against a variety of short, branched, and substituted esters. Is able to hydrolyze ester bonds within a wide range of p-nitrophenyl derivatives (C2-C14) in vitro, with a strong preference toward substrates of &gt;8 carbons. In Mus musculus (Mouse), this protein is Esterase OVCA2 (Ovca2).